The chain runs to 350 residues: Ubiquitin carboxyl-terminal hydrolase 11 (350 aa).

Positions 49-344 constitute a USP domain; sequence KGLYNVSGND…SACLLFYEME (296 aa). Cysteine 59 functions as the Nucleophile in the catalytic mechanism. Histidine 302 functions as the Proton acceptor in the catalytic mechanism.

It belongs to the peptidase C19 family.

It catalyses the reaction Thiol-dependent hydrolysis of ester, thioester, amide, peptide and isopeptide bonds formed by the C-terminal Gly of ubiquitin (a 76-residue protein attached to proteins as an intracellular targeting signal).. The sequence is that of Ubiquitin carboxyl-terminal hydrolase 11 (ubp11) from Schizosaccharomyces pombe (strain 972 / ATCC 24843) (Fission yeast).